We begin with the raw amino-acid sequence, 309 residues long: MEKVLVFGHKNPDTDAICSAIAYAELKKELGMNAEPVRLGEISGETQFALDYFKVEGPRFVETVANEVDNVILVDHNERQQSANDIESVRVLEVIDHHRIANFETSDPIYYRCEPVGCTATILNKMYKENGVTIRKEVAGLMLSAIISDSLLFKSPTCTEQDVAAARELAEIAGVDADKYGLEMLKAGADLSGKTMEQLISLDAKEFQMGNAKVEIAQVNAVDTNDVLVHQAELEKVISAVVEEKGLDLFLFVVTDILTNDSVGLAIGKAANIVEKAYNVSLENNTATLKGVVSRKKQIVPVLTEAFQA.

Mn(2+) is bound by residues His9, Asp13, Asp15, Asp75, His97, and Asp149.

It belongs to the PPase class C family. Mn(2+) is required as a cofactor.

It localises to the cytoplasm. It carries out the reaction diphosphate + H2O = 2 phosphate + H(+). This is Probable manganese-dependent inorganic pyrophosphatase from Bacillus anthracis (strain CDC 684 / NRRL 3495).